A 40-amino-acid polypeptide reads, in one-letter code: Natriuretic peptide PaNP-b (40 aa).

C9 and C25 are disulfide-bonded. Residues 36-40 (IPGGS) constitute a propeptide that is removed on maturation.

This sequence belongs to the natriuretic peptide family. Expressed by the venom gland.

It is found in the secreted. Functionally, snake venom natriuretic peptide that targets both NPR1 and NPR2. Exhibits hypotensive and vasodepressor activities. This chain is Natriuretic peptide PaNP-b, found in Pseudechis australis (Mulga snake).